Consider the following 71-residue polypeptide: Bacteriocin carnobacteriocin-A (71 aa).

Positions 1–18 (MNNVKELSIKEMQQVTGG) are excised as a propeptide. An intrachain disulfide couples Cys-40 to Cys-69.

It localises to the secreted. Has antibacterial activity. In Carnobacterium maltaromaticum (Carnobacterium piscicola), this protein is Bacteriocin carnobacteriocin-A (cbnBA).